Consider the following 486-residue polypeptide: Nucleolar protein 56 (486 aa).

The Nop domain maps to 298–416 (CAPSLSALIG…VEDRLEYFTS (119 aa)). Positions 450–486 (KKAKRLAEESVTATAEAEVDEDAPKPKKKKKSKAGDE) are disordered. Residues 475–486 (PKKKKKSKAGDE) show a composition bias toward basic residues.

This sequence belongs to the NOP5/NOP56 family.

Its subcellular location is the nucleus. It localises to the nucleolus. In terms of biological role, required for 60S ribosomal subunit synthesis. In Caenorhabditis elegans, this protein is Nucleolar protein 56.